The chain runs to 103 residues: MAHYKAADSKREQFRRYLEKSGVLDTLTKVLVALYEEPEKPTSALDFLKHHLGAATPENPEIELLRLELAEMKEKYEATVEENKKLKAKLVQYEPPQEEKRAE.

It belongs to the AMY1 family. Binds via its C-terminal region to the N-terminal region of MYC. Associates with AKAP1/S-AKAP84. Interacts with MYCBPAP. Interacts with CFAP91.

The protein localises to the cytoplasm. It localises to the nucleus. In terms of biological role, may control the transcriptional activity of MYC. Stimulates the activation of E box-dependent transcription by MYC. This is c-Myc-binding protein (Mycbp) from Mus musculus (Mouse).